Consider the following 610-residue polypeptide: F-box/LRR-repeat protein 4 (610 aa).

Positions 5–52 (DRINNCLPEELILEIFRRLESKPNRDACSLVCKRWLSLERFSRTTLRI) constitute an F-box domain. LRR repeat units follow at residues 53–79 (GASFSPDDFISLLSRRFLYITSIHVDE), 124–149 (SSSLTDTGLTALANGFPRIENLSLIW), 150–175 (CPNVSSVGLCSLAQKCTSLKSLDLQG), 178–200 (VGDQGLAAVGKFCKQLEELNLRF), 201–227 (CEGLTDVGVIDLVVGCSKSLKSIGVAA), 228–253 (SAKITDLSLEAVGSHCKLLEVLYLDS), 256–277 (IHDKGLIAVAQGCHRLKNLKLQ), 278–303 (CVSVTDVAFAAVGELCTSLERLALYS), 304–329 (FQHFTDKGMRAIGKGSKKLKDLTLSD), 330–355 (CYFVSCKGLEAIAHGCKELERVEING), 356–381 (CHNIGTRGIEAIGKSCPRLKELALLY), 382–407 (CQRIGNSALQEIGKGCKSLEILHLVD), 408–433 (CSGIGDIAMCSIAKGCRNLKKLHIRR), 434–459 (CYEIGNKGIISIGKHCKSLTELSLRF), 460–484 (CDKVGNKALIAIGKGCSLQQLNVSG), 485–510 (CNQISDAGITAIARGCPQLTHLDISV), 511–536 (LQNIGDMPLAELGEGCPMLKDLVLSH), 537–562 (CHHITDNGLNHLVQKCKLLETCHMVY), and 563–588 (CPGITSAGVATVVSSCPHIKKVLIEK). The disordered stretch occupies residues 88 to 125 (LSPSPKRKRGRDSSSPSSSKRKKLTDKTHSGAENVESS).

This is F-box/LRR-repeat protein 4 (FBL4) from Arabidopsis thaliana (Mouse-ear cress).